The sequence spans 976 residues: Ephrin type-A receptor 2 (976 aa).

Positions Met1–Ala23 are cleaved as a signal peptide. Residues Met1 to Gln206 form a mediates interaction with CLDN4 region. Topologically, residues Ala24 to Val537 are extracellular. In terms of domain architecture, Eph LBD spans Glu28–Gln206. Disulfide bonds link Cys70-Cys188 and Cys105-Cys115. The region spanning Pro328–Val432 is the Fibronectin type-III 1 domain. Residues Asn407 and Asn435 are each glycosylated (N-linked (GlcNAc...) asparagine). The Fibronectin type-III 2 domain occupies Glu438–Pro529. Residues Ile538–Ile558 traverse the membrane as a helical segment. Over His559–Ile976 the chain is Cytoplasmic. A Phosphoserine modification is found at Ser570. The residue at position 575 (Tyr575) is a Phosphotyrosine. Ser579 carries the post-translational modification Phosphoserine. Tyr588 is modified (phosphotyrosine; by autocatalysis). A Phosphotyrosine modification is found at Tyr594. Residues Thr606–Phe906 are mediates interaction with ARHGEF16 and ELMO2. Residues Val613–Ile875 form the Protein kinase domain. Position 619-627 (Ile619–Val627) interacts with ATP. At Tyr628 the chain carries Phosphotyrosine. Lys646 contacts ATP. Thr647 carries the phosphothreonine modification. Tyr735 is subject to Phosphotyrosine; by autocatalysis. Residue Asp739 is the Proton acceptor of the active site. Position 772 is a phosphotyrosine (Tyr772). Phosphoserine occurs at positions 869 and 892. A negatively regulates interaction with ARHGEF16 region spans residues Asp886–Ile976. Phosphoserine; by PKB/AKT1, RPS6KA1, RPS6KA3 AND PKA is present on Ser897. Position 901 is a phosphoserine (Ser901). An SAM domain is found at Val904 to Gln968. Tyr921 is subject to Phosphotyrosine; by autocatalysis. Position 930 is a phosphotyrosine (Tyr930). The PDZ-binding signature appears at Ile974–Ile976.

The protein belongs to the protein kinase superfamily. Tyr protein kinase family. Ephrin receptor subfamily. In terms of assembly, homodimer. Interacts with SLA. Interacts (phosphorylated form) with VAV2, VAV3 and PI3-kinase p85 subunit (PIK3R1, PIK3R2 or PIK3R3); critical for the EFNA1-induced activation of RAC1 which stimulates cell migration. Interacts with INPPL1; regulates activated EPHA2 endocytosis and degradation. Interacts (inactivated form) with PTK2/FAK1 and interacts (EFNA1 ligand-activated form) with PTPN11; regulates integrin-mediated adhesion. Interacts with ARHGEF16, DOCK4 and ELMO2; mediates ligand-independent activation of RAC1 which stimulates cell migration. Interacts with CLDN4; phosphorylates CLDN4 and may regulate tight junctions. Interacts with ACP1. Interacts (via SAM domain) with ANKS1A (via SAM domain). Interacts with CEMIP. Interacts with NCK1; may regulate EPHA2 activity in cell migration and adhesion. Interacts with TIMD4. (Microbial infection) Interacts with human herpes virus 8/HHV-8 glycoprotein L/gL and glycoprotein H/gH heterodimer; this interaction triggers EPHA2 phosphorylation and endocytosis, allowing virus entry. As to quaternary structure, (Microbial infection) Interacts with human cytomegalovirus (HCMV) glycoprotein L/gL and glycoprotein H/gH heterodimer. In terms of assembly, (Microbial infection) Interacts with Epstein-Barr virus/HHV-4 glycoprotein L/gL and glycoprotein H/gH heterodimer; this interaction facilitates virus internalization and fusion. Post-translationally, autophosphorylates. Phosphorylated on tyrosine upon binding and activation by EFNA1. Phosphorylated residues Tyr-588 and Tyr-594 are required for binding VAV2 and VAV3 while phosphorylated residues Tyr-735 and Tyr-930 are required for binding PI3-kinase p85 subunit (PIK3R1, PIK3R2 or PIK3R3). These phosphorylated residues are critical for recruitment of VAV2 and VAV3 and PI3-kinase p85 subunit which transduce downstream signaling to activate RAC1 GTPase and cell migration. Dephosphorylation of Tyr-930 by PTPRF prevents the interaction of EPHA2 with NCK1. Phosphorylated at Ser-897 by PKB; serum-induced phosphorylation which targets EPHA2 to the cell leading edge and stimulates cell migration. Phosphorylation by PKB is inhibited by EFNA1-activated EPHA2 which regulates PKB activity via a reciprocal regulatory loop. Phosphorylated at Ser-897 in response to TNF by RPS6KA1 and RPS6KA3; RPS6KA-EPHA2 signaling pathway controls cell migration. Phosphorylated at Ser-897 by PKA; blocks cell retraction induced by EPHA2 kinase activity. Dephosphorylated by ACP1. In terms of processing, ubiquitinated by CHIP/STUB1. Ubiquitination is regulated by the HSP90 chaperone and regulates the receptor stability and activity through proteasomal degradation. ANKS1A prevents ubiquitination and degradation. Expressed in brain and glioma tissue and glioma cell lines (at protein level). Expressed most highly in tissues that contain a high proportion of epithelial cells, e.g. skin, intestine, lung, and ovary.

It is found in the cell membrane. The protein resides in the cell projection. It localises to the ruffle membrane. The protein localises to the lamellipodium membrane. Its subcellular location is the cell junction. It is found in the focal adhesion. The catalysed reaction is L-tyrosyl-[protein] + ATP = O-phospho-L-tyrosyl-[protein] + ADP + H(+). In terms of biological role, receptor tyrosine kinase which binds promiscuously membrane-bound ephrin-A family ligands residing on adjacent cells, leading to contact-dependent bidirectional signaling into neighboring cells. The signaling pathway downstream of the receptor is referred to as forward signaling while the signaling pathway downstream of the ephrin ligand is referred to as reverse signaling. Activated by the ligand ephrin-A1/EFNA1 regulates migration, integrin-mediated adhesion, proliferation and differentiation of cells. Regulates cell adhesion and differentiation through DSG1/desmoglein-1 and inhibition of the ERK1/ERK2 (MAPK3/MAPK1, respectively) signaling pathway. May also participate in UV radiation-induced apoptosis and have a ligand-independent stimulatory effect on chemotactic cell migration. During development, may function in distinctive aspects of pattern formation and subsequently in development of several fetal tissues. Involved for instance in angiogenesis, in early hindbrain development and epithelial proliferation and branching morphogenesis during mammary gland development. Engaged by the ligand ephrin-A5/EFNA5 may regulate lens fiber cells shape and interactions and be important for lens transparency development and maintenance. With ephrin-A2/EFNA2 may play a role in bone remodeling through regulation of osteoclastogenesis and osteoblastogenesis. (Microbial infection) Acts as a receptor for hepatitis C virus (HCV) in hepatocytes and facilitates its cell entry. Mediates HCV entry by promoting the formation of the CD81-CLDN1 receptor complexes that are essential for HCV entry and by enhancing membrane fusion of cells expressing HCV envelope glycoproteins. Its function is as follows. Acts as a receptor for human cytomegalovirus (HCMV) to mediate viral entry and fusion in glioblastoma cells. In Homo sapiens (Human), this protein is Ephrin type-A receptor 2 (EPHA2).